Reading from the N-terminus, the 245-residue chain is Small ribosomal subunit protein uS2 (245 aa).

The protein belongs to the universal ribosomal protein uS2 family.

In Pseudomonas putida (strain W619), this protein is Small ribosomal subunit protein uS2.